A 432-amino-acid chain; its full sequence is UDP-N-acetylmuramate--L-alanine ligase (432 aa).

108–114 (GAHGKTS) is a binding site for ATP.

It belongs to the MurCDEF family.

Its subcellular location is the cytoplasm. It carries out the reaction UDP-N-acetyl-alpha-D-muramate + L-alanine + ATP = UDP-N-acetyl-alpha-D-muramoyl-L-alanine + ADP + phosphate + H(+). Its pathway is cell wall biogenesis; peptidoglycan biosynthesis. Cell wall formation. The polypeptide is UDP-N-acetylmuramate--L-alanine ligase (Bacillus pumilus (strain SAFR-032)).